Here is a 1322-residue protein sequence, read N- to C-terminus: Sal-like protein 1 (1322 aa).

The disordered stretch occupies residues methionine 1–aspartate 41. Residues proline 22 to aspartate 41 are compositionally biased toward basic and acidic residues. The segment at histidine 43–cysteine 65 adopts a C2H2-type 1; atypical zinc-finger fold. The disordered stretch occupies residues proline 78–glutamate 128. Basic and acidic residues-rich tracts occupy residues aspartate 96 to glutamine 107 and serine 114 to serine 124. Lysine 440 participates in a covalent cross-link: Glycyl lysine isopeptide (Lys-Gly) (interchain with G-Cter in SUMO2). 2 consecutive C2H2-type zinc fingers follow at residues histidine 450–histidine 472 and phenylalanine 478–histidine 500. Positions proline 578 to asparagine 659 are disordered. Residues serine 584–serine 594 show a composition bias toward polar residues. Serine 591, serine 594, and serine 596 each carry phosphoserine. Residues asparagine 629–serine 645 are compositionally biased toward polar residues. Glycyl lysine isopeptide (Lys-Gly) (interchain with G-Cter in SUMO2) cross-links involve residues lysine 672, lysine 689, and lysine 700. 3 C2H2-type zinc fingers span residues asparagine 705–histidine 727, phenylalanine 733–histidine 755, and histidine 765–histidine 787. 2 disordered regions span residues glycine 789–leucine 855 and serine 891–proline 961. Acidic residues predominate over residues aspartate 819–proline 832. Positions serine 842 to leucine 855 are enriched in low complexity. The span at threonine 898–glutamine 935 shows a compositional bias: polar residues. Basic and acidic residues predominate over residues glutamate 936–glutamine 948. Serine 940 carries the post-translational modification Phosphoserine. Residues lysine 946 and lysine 981 each participate in a glycyl lysine isopeptide (Lys-Gly) (interchain with G-Cter in SUMO2) cross-link. 2 consecutive C2H2-type zinc fingers follow at residues threonine 1000 to histidine 1022 and phenylalanine 1028 to histidine 1050. Lysine 1085 participates in a covalent cross-link: Glycyl lysine isopeptide (Lys-Gly) (interchain with G-Cter in SUMO2). A disordered region spans residues valine 1094–proline 1119. C2H2-type zinc fingers lie at residues histidine 1133 to histidine 1155 and phenylalanine 1161 to histidine 1183. Glycyl lysine isopeptide (Lys-Gly) (interchain with G-Cter in SUMO2) cross-links involve residues lysine 1218, lysine 1297, and lysine 1317.

This sequence belongs to the sal C2H2-type zinc-finger protein family. May associate with NuRD histone deacetylase complex (HDAC). Interacts with components of HDAC complex including HDAC1, HDAC2, RBBP4, RBPP7, MTA1 and MTA2. Interacts with CCNQ. Interacts with NSD2 (via PHD-type zinc fingers 1, 2 and 3). As to expression, expressed in the metanephric mesenchyme surrounding ureteric bud.

It localises to the nucleus. Its function is as follows. Transcriptional repressor involved in organogenesis. Plays an essential role in ureteric bud invasion during kidney development. This chain is Sal-like protein 1 (Sall1), found in Mus musculus (Mouse).